The following is a 193-amino-acid chain: Protein SINE3 (193 aa).

Residues 15–35 (SELGAKRLKDPEMKNRKVTTE) form a disordered region. A compositionally biased stretch (basic and acidic residues) spans 18–35 (GAKRLKDPEMKNRKVTTE). Residues 155-193 (VTVKFRIVLLSFILWAILAAIVVFFSSGEERAYRGPLPT) enclose the KASH domain. Residues 161 to 181 (IVLLSFILWAILAAIVVFFSS) form a helical membrane-spanning segment. Positions 190–193 (PLPT) match the Required for nuclear localization motif.

Interacts with SUN1 and SUN2.

It localises to the nucleus membrane. This Arabidopsis thaliana (Mouse-ear cress) protein is Protein SINE3.